A 386-amino-acid polypeptide reads, in one-letter code: Ovalbumin (386 aa).

Position 2 is an N-acetylglycine (Gly2). The not cleaved signal peptide spans 22 to 48; the sequence is HHANENIFYCPIAIMSALAMVYLGAKD. Ser69 is modified (phosphoserine). Cys74 and Cys121 are disulfide-bonded. Glu192 is a binding site for Ca(2+). N-linked (GlcNAc...) asparagine glycosylation is present at Asn293. At Ser345 the chain carries Phosphoserine.

This sequence belongs to the serpin family. Ov-serpin subfamily. Homodimer. Post-translationally, undergoes proteolytic cleavage first at the canonical P1-P1' site, and then at the P8-P7 site by subtilisin. Major protein of egg white. Expressed in the magnum of the oviduct (at protein level).

The protein localises to the secreted. Its function is as follows. Non-inhibitory serpin. Storage protein of egg white. The sequence is that of Ovalbumin (SERPINB14) from Gallus gallus (Chicken).